We begin with the raw amino-acid sequence, 628 residues long: Biosynthetic arginine decarboxylase (628 aa).

Position 101 is an N6-(pyridoxal phosphate)lysine (K101). Residue V281–Y291 participates in substrate binding.

It belongs to the Orn/Lys/Arg decarboxylase class-II family. SpeA subfamily. Mg(2+) is required as a cofactor. It depends on pyridoxal 5'-phosphate as a cofactor.

It catalyses the reaction L-arginine + H(+) = agmatine + CO2. It participates in amine and polyamine biosynthesis; agmatine biosynthesis; agmatine from L-arginine: step 1/1. Catalyzes the biosynthesis of agmatine from arginine. The polypeptide is Biosynthetic arginine decarboxylase (Alkalilimnicola ehrlichii (strain ATCC BAA-1101 / DSM 17681 / MLHE-1)).